Here is a 117-residue protein sequence, read N- to C-terminus: cAMP-regulated phosphoprotein 19-A (117 aa).

Positions 1-37 are enriched in basic and acidic residues; the sequence is MSGENQETKAQEESSALEQKEIDDKVVSPEKSEEIKL. Residues 1–54 are disordered; the sequence is MSGENQETKAQEESSALEQKEIDDKVVSPEKSEEIKLKARYPNLGPKPGGSDFL. Serine 28 carries the post-translational modification Phosphoserine; by CDK2. A Phosphoserine; by GWL modification is found at serine 67. A disordered region spans residues 78–117; that stretch reads KNKQLPTAASDKTEVTGDHIPTPQDLPQRKPSLVASKLAG. A Phosphothreonine; by CDK2 modification is found at threonine 99. Serine 109 bears the Phosphoserine; by PKA mark.

This sequence belongs to the endosulfine family. As to quaternary structure, interacts (when phosphorylated at Ser-67) with ppp2r2d. In terms of processing, phosphorylation at Ser-67 by gwl during mitosis is essential for interaction with ppp2r2d (PR55-delta) and subsequent inactivation of PP2A. Phosphorylated by PKA.

The protein localises to the cytoplasm. In terms of biological role, protein phosphatase inhibitor that specifically inhibits protein phosphatase 2A (PP2A) during mitosis. When phosphorylated at Ser-67 during mitosis, specifically interacts with ppp2r2d (PR55-delta) and inhibits its activity, leading to inactivation of PP2A, an essential condition to keep cyclin-B1-CDK1 activity high during M phase. The chain is cAMP-regulated phosphoprotein 19-A (arpp19-a) from Xenopus laevis (African clawed frog).